Reading from the N-terminus, the 142-residue chain is Transcriptional regulator MraZ (142 aa).

SpoVT-AbrB domains follow at residues 5 to 47 and 76 to 119; these read EFTH…PLNE and ATDC…SAER.

It belongs to the MraZ family. In terms of assembly, forms oligomers.

The protein localises to the cytoplasm. It is found in the nucleoid. In Limosilactobacillus reuteri (strain DSM 20016) (Lactobacillus reuteri), this protein is Transcriptional regulator MraZ.